Here is a 240-residue protein sequence, read N- to C-terminus: Putative tyrosine phosphatase 067L (240 aa).

In terms of domain architecture, Tyrosine-protein phosphatase spans 3–151 (QASFFVADKA…EREWPLNPTQ (149 aa)). Cys-96 serves as the catalytic Phosphocysteine intermediate.

It belongs to the protein-tyrosine phosphatase family.

The catalysed reaction is O-phospho-L-tyrosyl-[protein] + H2O = L-tyrosyl-[protein] + phosphate. The sequence is that of Putative tyrosine phosphatase 067L from Aedes vexans (Inland floodwater mosquito).